Here is a 363-residue protein sequence, read N- to C-terminus: Cytoplasmic tRNA 2-thiolation protein 1 (363 aa).

Residues 337 to 363 are disordered; that stretch reads DGDCEQQATRSERNRSSLQGKHGNFDF.

The protein belongs to the TtcA family. CTU1/NCS6/ATPBD3 subfamily.

It localises to the cytoplasm. The protein operates within tRNA modification; 5-methoxycarbonylmethyl-2-thiouridine-tRNA biosynthesis. Functionally, plays a central role in 2-thiolation of mcm(5)S(2)U at tRNA wobble positions of tRNA(Lys), tRNA(Glu) and tRNA(Gln). Directly binds tRNAs and probably acts by catalyzing adenylation of tRNAs, an intermediate required for 2-thiolation. It is unclear whether it acts as a sulfurtransferase that transfers sulfur from thiocarboxylated URM1 onto the uridine of tRNAs at wobble position. This chain is Cytoplasmic tRNA 2-thiolation protein 1, found in Oryza sativa subsp. japonica (Rice).